The following is a 129-amino-acid chain: Small ribosomal subunit protein uS11 (129 aa).

The protein belongs to the universal ribosomal protein uS11 family. As to quaternary structure, part of the 30S ribosomal subunit. Interacts with proteins S7 and S18. Binds to IF-3.

Located on the platform of the 30S subunit, it bridges several disparate RNA helices of the 16S rRNA. Forms part of the Shine-Dalgarno cleft in the 70S ribosome. This chain is Small ribosomal subunit protein uS11, found in Rhizobium etli (strain CIAT 652).